We begin with the raw amino-acid sequence, 223 residues long: MSRIPIHSLLNPSESCKSISNVPSNYRDLSTFNKERAKVITTFQEMFYSMLENNDDYNKIESLIRNFQPKLTWSHKCESLTFKQKAYLTAIIQKSIKSLLVLLKEKGKMREIEFSRKEVRKINKYRQSSKNFESVNIKILTQDLMHSNNNEFKKGKRFLKSHIQLLENWYSMNRRNPYLAENDLAYISKNTTLTKTQIKNWLANRRRKDKITEVSSDIRNILN.

The homeobox; TALE-type DNA-binding region spans 151 to 213; the sequence is EFKKGKRFLK…NRRRKDKITE (63 aa).

This sequence belongs to the TALE/M-ATYP homeobox family. As to quaternary structure, forms a heterodimer with A1.

Its subcellular location is the nucleus. Functionally, mating type proteins are sequence specific DNA-binding proteins that act as master switches in yeast differentiation by controlling gene expression in a cell type-specific fashion. Transcriptional corepressor that acts in conjunction with A1 to repress transcription of haploid-specific genes. In Kluyveromyces lactis (strain ATCC 8585 / CBS 2359 / DSM 70799 / NBRC 1267 / NRRL Y-1140 / WM37) (Yeast), this protein is Mating-type protein ALPHA2 (HMLALPHA2).